A 124-amino-acid polypeptide reads, in one-letter code: Small ribosomal subunit protein bS6 (124 aa).

The disordered stretch occupies residues 93 to 124 (KKAETGPSSMMKTVEREEARKAQQAEYAANNS). Basic and acidic residues predominate over residues 105-115 (TVEREEARKAQ).

Belongs to the bacterial ribosomal protein bS6 family.

Its function is as follows. Binds together with bS18 to 16S ribosomal RNA. The protein is Small ribosomal subunit protein bS6 of Variovorax paradoxus (strain S110).